We begin with the raw amino-acid sequence, 125 residues long: Protein ApaG (125 aa).

The ApaG domain maps to 1-125 (MADSPRVCVQ…FRLAVPTLIH (125 aa)).

This chain is Protein ApaG, found in Cronobacter sakazakii (strain ATCC BAA-894) (Enterobacter sakazakii).